The sequence spans 316 residues: PAK4-inhibitor inka1 (316 aa).

The segment at 108–130 (YSEVSGSSLRGEEDDIVEEESET) is disordered. Residues 119–128 (EEDDIVEEES) are compositionally biased toward acidic residues. Inka box stretches follow at residues 182–219 (DSQD…DLPE) and 289–316 (SDIA…AGFL).

This sequence belongs to the INKA family. As to quaternary structure, interacts with pak4/pak5.

The protein localises to the nucleus. It is found in the cytoplasm. Its function is as follows. Inhibitor of the serine/threonine-protein kinase pak4/pak5. Acts by binding pak4/pak5 in a substrate-like manner, inhibiting the protein kinase activity. Required for the proper migration of neural crest cells during embryonic development, probably by inhibiting pak4/pak5. The protein is PAK4-inhibitor inka1 of Xenopus laevis (African clawed frog).